The primary structure comprises 375 residues: tRNA-specific 2-thiouridylase MnmA (375 aa).

ATP contacts are provided by residues 12-19 (GMSGGVDS) and Met-38. The interval 98-100 (NPD) is interaction with target base in tRNA. The Nucleophile role is filled by Cys-103. Residues Cys-103 and Cys-200 are joined by a disulfide bond. Gly-127 is an ATP binding site. Residues 150-152 (KDQ) are interaction with tRNA. Cys-200 acts as the Cysteine persulfide intermediate in catalysis. An interaction with tRNA region spans residues 312–313 (RY).

The protein belongs to the MnmA/TRMU family.

The protein localises to the cytoplasm. The catalysed reaction is S-sulfanyl-L-cysteinyl-[protein] + uridine(34) in tRNA + AH2 + ATP = 2-thiouridine(34) in tRNA + L-cysteinyl-[protein] + A + AMP + diphosphate + H(+). Its function is as follows. Catalyzes the 2-thiolation of uridine at the wobble position (U34) of tRNA, leading to the formation of s(2)U34. In Lactobacillus johnsonii (strain CNCM I-12250 / La1 / NCC 533), this protein is tRNA-specific 2-thiouridylase MnmA.